We begin with the raw amino-acid sequence, 394 residues long: MLWKLLRLFIIIKLIQLAIIYFSPCQFDTSSELIIQNLSSTSSSKSYYNVIITTILNKLIVWDSVYFNDLFINPIQFEHQFVFCPGWIQLIKLLNIKNYYTAQLTSILISNLCHFASVITLYYLTNEMDMKFGLVSGLLMIISPAGVFLTGNYSENLSNLLTLLMFLTYYKSINFNDVKQPSNKSITNILGYIISGIFCAINFTVRANGLLLGVIYVFDLYHFIQNKSSSQIILSIITGSILFMTFLMTNIYHYIKFCPGREWCNNTFPSLFQFAQHHYWNVGFLKYWTPNNIPNFILVLPVLIFNIYSLGYMYQELPKNRKLLPLIVINGLIVVGGTFFWNIQILNRITSFSPLIYWTLAYNLKKPWAKYAIGYCIVWNFVQTGLFAAFLPPA.

A run of 9 helical transmembrane segments spans residues 2–22 (LWKL…IIYF), 47–67 (YYNV…SVYF), 104–124 (LTSI…LYYL), 132–152 (FGLV…LTGN), 185–205 (SITN…NFTV), 232–252 (IILS…TNIY), 293–313 (IPNF…LGYM), 323–343 (LLPL…FWNI), and 371–391 (YAIG…AAFL).

The protein belongs to the PIGV family.

It localises to the endoplasmic reticulum membrane. Its pathway is glycolipid biosynthesis; glycosylphosphatidylinositol-anchor biosynthesis. Functionally, mannosyltransferase involved in glycosylphosphatidylinositol-anchor biosynthesis. Transfers the second mannose to the glycosylphosphatidylinositol during GPI precursor assembly. The protein is GPI mannosyltransferase 2 (GPI18) of Candida albicans (strain SC5314 / ATCC MYA-2876) (Yeast).